We begin with the raw amino-acid sequence, 328 residues long: Malate dehydrogenase (328 aa).

12 to 18 (GAAGQIG) contacts NAD(+). Substrate contacts are provided by Arg-95 and Arg-101. NAD(+) contacts are provided by residues Asn-108, Gln-115, and 132 to 134 (VGN). Substrate contacts are provided by Asn-134 and Arg-165. His-190 serves as the catalytic Proton acceptor.

This sequence belongs to the LDH/MDH superfamily. MDH type 2 family.

It catalyses the reaction (S)-malate + NAD(+) = oxaloacetate + NADH + H(+). Its function is as follows. Catalyzes the reversible oxidation of malate to oxaloacetate. The sequence is that of Malate dehydrogenase from Methylibium petroleiphilum (strain ATCC BAA-1232 / LMG 22953 / PM1).